Reading from the N-terminus, the 571-residue chain is Urease subunit alpha (571 aa).

The Urease domain occupies 134–571; it reads GAIDTHIHFI…LPMAQRYFLF (438 aa). Residues His-139, His-141, and Lys-222 each coordinate Ni(2+). Lys-222 carries the post-translational modification N6-carboxylysine. Position 224 (His-224) interacts with substrate. Positions 251 and 277 each coordinate Ni(2+). The active-site Proton donor is the His-325. Asp-365 lines the Ni(2+) pocket.

This sequence belongs to the metallo-dependent hydrolases superfamily. Urease alpha subunit family. In terms of assembly, heterotrimer of UreA (gamma), UreB (beta) and UreC (alpha) subunits. Three heterotrimers associate to form the active enzyme. The cofactor is Ni cation. In terms of processing, carboxylation allows a single lysine to coordinate two nickel ions.

It localises to the cytoplasm. The enzyme catalyses urea + 2 H2O + H(+) = hydrogencarbonate + 2 NH4(+). The protein operates within nitrogen metabolism; urea degradation; CO(2) and NH(3) from urea (urease route): step 1/1. The protein is Urease subunit alpha of Bordetella bronchiseptica (strain ATCC BAA-588 / NCTC 13252 / RB50) (Alcaligenes bronchisepticus).